The primary structure comprises 231 residues: Triggering receptor expressed on myeloid cells 1 (231 aa).

A signal peptide spans 1 to 20; the sequence is MRKTRLWGLLWMFFVSELLA. The Extracellular segment spans residues 21–202; the sequence is ATKLTEEKYE…TDIIRVPVFN (182 aa). Positions 26-131 constitute an Ig-like V-type domain; the sequence is EEKYELKEGQ…LFDRIRLVVT (106 aa). Cysteine 41 and cysteine 110 form a disulfide bridge. Polar residues-rich tracts occupy residues 134-157 and 164-182; these read SSGT…TTTK and TSPT…DVST. The disordered stretch occupies residues 134-182; that stretch reads SSGTPGSSENSTPNVYKTPPTTTKALRPLYTSPTTVTQAPPKSTADVST. N-linked (GlcNAc...) asparagine glycosylation is found at asparagine 188 and asparagine 191. Residues 203 to 223 form a helical membrane-spanning segment; that stretch reads IAILVAGGFLSKSLVFSVLFA. At 224-231 the chain is on the cytoplasmic side; sequence VTLRSFVP.

As to quaternary structure, monomer. Homomultimer; when activated. Interacts with TYROBP/DAP12. Interacts with TLR4.

The protein resides in the cell membrane. In terms of biological role, cell surface receptor that plays important roles in innate and adaptive immunity by amplifying inflammatory responses. Upon activation by various ligands such as PGLYRP1, HMGB1 or HSP70, multimerizes and forms a complex with transmembrane adapter TYROBP/DAP12. In turn, initiates a SYK-mediated cascade of tyrosine phosphorylation, activating multiple downstream mediators such as BTK, MAPK1, MAPK3 or phospholipase C-gamma. This cascade promotes the neutrophil- and macrophage-mediated release of pro-inflammatory cytokines and/or chemokines, as well as their migration and thereby amplifies inflammatory responses that are triggered by bacterial and fungal infections. By also promoting the amplification of inflammatory signals that are initially triggered by Toll-like receptor (TLR) and NOD-like receptor engagement, plays a major role in the pathophysiology of acute and chronic inflammatory diseases of different etiologies including septic shock and atherosclerosis. The protein is Triggering receptor expressed on myeloid cells 1 (TREM1) of Pongo abelii (Sumatran orangutan).